Reading from the N-terminus, the 244-residue chain is tRNA pseudouridine synthase A (244 aa).

Asp52 serves as the catalytic Nucleophile. Tyr110 contacts substrate.

Belongs to the tRNA pseudouridine synthase TruA family. In terms of assembly, homodimer.

It carries out the reaction uridine(38/39/40) in tRNA = pseudouridine(38/39/40) in tRNA. Its function is as follows. Formation of pseudouridine at positions 38, 39 and 40 in the anticodon stem and loop of transfer RNAs. This is tRNA pseudouridine synthase A from Geotalea daltonii (strain DSM 22248 / JCM 15807 / FRC-32) (Geobacter daltonii).